A 684-amino-acid polypeptide reads, in one-letter code: DNA gyrase subunit B, novobiocin-sensitive (684 aa).

The disordered stretch occupies residues 1–22 (MADSGNPNENTPSVATGENGEV). Residues 154-302 (VKTDGYRWTQ…RMLSVEIAMQ (149 aa)) form a novobiocin-binding region. Residues 463-577 (CEIFIVEGDS…AGHVYLSRPP (115 aa)) form the Toprim domain. Residues glutamate 469, aspartate 542, and aspartate 544 each coordinate Mg(2+).

Belongs to the type II topoisomerase GyrB family. As to quaternary structure, heterotetramer, composed of two GyrA and two GyrB chains. In the heterotetramer, GyrA contains the active site tyrosine that forms a transient covalent intermediate with DNA, while GyrB binds cofactors and catalyzes ATP hydrolysis. Mg(2+) serves as cofactor. Mn(2+) is required as a cofactor. Requires Ca(2+) as cofactor.

Its subcellular location is the cytoplasm. The enzyme catalyses ATP-dependent breakage, passage and rejoining of double-stranded DNA.. Functionally, a type II topoisomerase that negatively supercoils closed circular double-stranded (ds) DNA in an ATP-dependent manner to modulate DNA topology and maintain chromosomes in an underwound state. Negative supercoiling favors strand separation, and DNA replication, transcription, recombination and repair, all of which involve strand separation. Also able to catalyze the interconversion of other topological isomers of dsDNA rings, including catenanes and knotted rings. Type II topoisomerases break and join 2 DNA strands simultaneously in an ATP-dependent manner. The protein is DNA gyrase subunit B, novobiocin-sensitive of Streptomyces niveus (Streptomyces spheroides).